The following is a 65-amino-acid chain: Disintegrin VLO4 (65 aa).

The region spanning 1–65 is the Disintegrin domain; it reads MNSGNPCCDP…PDCPRNPWKG (65 aa). Cystine bridges form between cysteine 7–cysteine 30, cysteine 21–cysteine 27, cysteine 26–cysteine 51, and cysteine 39–cysteine 58. Positions 43–45 match the Cell attachment site motif; that stretch reads RGD.

This sequence belongs to the disintegrin family. Dimeric disintegrin subfamily. As to quaternary structure, homodimer; disulfide-linked. Expressed by the venom gland.

It is found in the secreted. In terms of biological role, poor inhibitor of platelet aggregation. The disintegrin inhibits the adhesion of cells expressing the RGD-dependent integrin alpha-5/beta-1 (ITGA5/ITGB1) to immobilized fibronectin. Inhibition on alpha-2b/beta-3 (ITGA2B/ITGB3) is low. This chain is Disintegrin VLO4, found in Macrovipera lebetina obtusa (Levant blunt-nosed viper).